The chain runs to 1013 residues: GTPase-activating protein BEM3 (1013 aa).

4 disordered regions span residues 90–197, 258–277, 282–301, and 307–421; these read TVVE…GSPA, GSRYDTERAGGPGPLSPESI, SDLQEHQPSDLSSTTRTDLG, and VDTT…HQSK. Residues 143–160 show a composition bias toward polar residues; the sequence is QEATSGAQQVPLLTSSKS. 3 stretches are compositionally biased toward polar residues: residues 309–319, 333–388, and 404–418; these read TTFNAEDNPTG, TLQN…TSSN, and KSYSQHSGSPHSNSH. The PH domain maps to 555–662; the sequence is EFAKEGMLLV…WISVLTTLCD (108 aa). The disordered stretch occupies residues 702 to 726; sequence AMDATSPTRPNDPNPVSLTSEEEKE. Polar residues predominate over residues 706–720; sequence TSPTRPNDPNPVSLT. In terms of domain architecture, Rho-GAP spans 799–1013; the sequence is LQLSSHPYQG…PPVNIHIPQI (215 aa).

The protein resides in the cytoplasm. GTPase-activating protein (GAP) for CDC42 and less efficiently for RHO1. Negative regulator of the pheromone-response pathway through the STE20 protein kinase. The protein is GTPase-activating protein BEM3 (BEM3) of Eremothecium gossypii (strain ATCC 10895 / CBS 109.51 / FGSC 9923 / NRRL Y-1056) (Yeast).